Here is a 192-residue protein sequence, read N- to C-terminus: Fe/S biogenesis protein NfuA (192 aa).

[4Fe-4S] cluster contacts are provided by C149 and C152.

It belongs to the NfuA family. Homodimer. [4Fe-4S] cluster serves as cofactor.

Involved in iron-sulfur cluster biogenesis. Binds a 4Fe-4S cluster, can transfer this cluster to apoproteins, and thereby intervenes in the maturation of Fe/S proteins. Could also act as a scaffold/chaperone for damaged Fe/S proteins. The polypeptide is Fe/S biogenesis protein NfuA (Aeromonas salmonicida (strain A449)).